Reading from the N-terminus, the 450-residue chain is Phosphoglucosamine mutase (450 aa).

Ser102 functions as the Phosphoserine intermediate in the catalytic mechanism. Mg(2+) is bound by residues Ser102, Asp243, Asp245, and Asp247. Ser102 is subject to Phosphoserine.

The protein belongs to the phosphohexose mutase family. It depends on Mg(2+) as a cofactor. Activated by phosphorylation.

The enzyme catalyses alpha-D-glucosamine 1-phosphate = D-glucosamine 6-phosphate. Catalyzes the conversion of glucosamine-6-phosphate to glucosamine-1-phosphate. This chain is Phosphoglucosamine mutase, found in Mesorhizobium japonicum (strain LMG 29417 / CECT 9101 / MAFF 303099) (Mesorhizobium loti (strain MAFF 303099)).